A 299-amino-acid polypeptide reads, in one-letter code: Acetylglutamate kinase (299 aa).

Substrate is bound by residues 72–73 (GG), R94, and N196.

Belongs to the acetylglutamate kinase family. ArgB subfamily.

The protein resides in the cytoplasm. It catalyses the reaction N-acetyl-L-glutamate + ATP = N-acetyl-L-glutamyl 5-phosphate + ADP. It participates in amino-acid biosynthesis; L-arginine biosynthesis; N(2)-acetyl-L-ornithine from L-glutamate: step 2/4. In terms of biological role, catalyzes the ATP-dependent phosphorylation of N-acetyl-L-glutamate. This is Acetylglutamate kinase from Burkholderia mallei (strain NCTC 10247).